The following is a 315-amino-acid chain: MENDKPFIVVLVGPTAVGKTEFSIELAKKYNGEIISGDSMQVYKNMDIGTAKITLDEMSGIPHQMIDILEPDEPFSAYEFKNRAQKLIKEITHRGRVPIIVGGTGLYIQSLIYDYAFEDETISEAHSESVETQLAELDQLSNDELHQYLASFDEISAQDIHPNNRKRVRRAIQYYLKTKKLLSSRKKVQQFTENYDTLLLGIEMSRDILYQRINTRVDIMLERGLLSEVKQLVENGYETSQSMQAIGYKEIVPVINGQISLDEATNKLKQHSRNYAKRQMTWFKNKLDVLWLDREKMSLSLMLDEVSVQIQKRRT.

Residue G13 to T20 participates in ATP binding. Position 15 to 20 (T15 to T20) interacts with substrate. The segment at D38 to Q41 is interaction with substrate tRNA.

The protein belongs to the IPP transferase family. In terms of assembly, monomer. Mg(2+) is required as a cofactor.

The enzyme catalyses adenosine(37) in tRNA + dimethylallyl diphosphate = N(6)-dimethylallyladenosine(37) in tRNA + diphosphate. Functionally, catalyzes the transfer of a dimethylallyl group onto the adenine at position 37 in tRNAs that read codons beginning with uridine, leading to the formation of N6-(dimethylallyl)adenosine (i(6)A). This is tRNA dimethylallyltransferase from Staphylococcus saprophyticus subsp. saprophyticus (strain ATCC 15305 / DSM 20229 / NCIMB 8711 / NCTC 7292 / S-41).